Here is a 38-residue protein sequence, read N- to C-terminus: Photosystem II reaction center protein X 2 (38 aa).

The chain crosses the membrane as a helical span at residues 8-28; it reads FLWSLVYGAVVLGLLFGAIVF.

It belongs to the PsbX family. Type 1 subfamily. In terms of assembly, PSII is composed of 1 copy each of membrane proteins PsbA, PsbB, PsbC, PsbD, PsbE, PsbF, PsbH, PsbI, PsbJ, PsbK, PsbL, PsbM, PsbT, PsbX, PsbY, PsbZ, Psb30/Ycf12, peripheral proteins PsbO, CyanoQ (PsbQ), PsbU, PsbV and a large number of cofactors. It forms dimeric complexes.

Its subcellular location is the cellular thylakoid membrane. In terms of biological role, involved in the binding and/or turnover of quinones at the Q(B) site of photosystem II (PSII). PSII is a light-driven water plastoquinone oxidoreductase, using light energy to abstract electrons from H(2)O, generating a proton gradient subsequently used for ATP formation. The protein is Photosystem II reaction center protein X 2 of Synechococcus sp. (strain JA-3-3Ab) (Cyanobacteria bacterium Yellowstone A-Prime).